The sequence spans 88 residues: Small ribosomal subunit protein uS15 (88 aa).

The protein belongs to the universal ribosomal protein uS15 family. As to quaternary structure, part of the 30S ribosomal subunit. Forms a bridge to the 50S subunit in the 70S ribosome, contacting the 23S rRNA.

Its function is as follows. One of the primary rRNA binding proteins, it binds directly to 16S rRNA where it helps nucleate assembly of the platform of the 30S subunit by binding and bridging several RNA helices of the 16S rRNA. Functionally, forms an intersubunit bridge (bridge B4) with the 23S rRNA of the 50S subunit in the ribosome. The sequence is that of Small ribosomal subunit protein uS15 from Borreliella burgdorferi (strain ATCC 35210 / DSM 4680 / CIP 102532 / B31) (Borrelia burgdorferi).